The following is a 188-amino-acid chain: Tumor necrosis factor alpha-induced protein 8-like protein (188 aa).

Belongs to the TNFAIP8 family.

In Drosophila pseudoobscura pseudoobscura (Fruit fly), this protein is Tumor necrosis factor alpha-induced protein 8-like protein.